Reading from the N-terminus, the 952-residue chain is RNA polymerase-associated protein RapA (952 aa).

The Helicase ATP-binding domain occupies 164 to 334 (EVGRRYAPRV…FARLRLLDPD (171 aa)). 177–184 (DEVGLGKT) contacts ATP. Residues 280–283 (DEAH) carry the DEAH box motif. The Helicase C-terminal domain maps to 492–668 (RVNWLLELLK…GKSDGLESLI (177 aa)).

Belongs to the SNF2/RAD54 helicase family. RapA subfamily. As to quaternary structure, interacts with the RNAP. Has a higher affinity for the core RNAP than for the holoenzyme. Its ATPase activity is stimulated by binding to RNAP.

Functionally, transcription regulator that activates transcription by stimulating RNA polymerase (RNAP) recycling in case of stress conditions such as supercoiled DNA or high salt concentrations. Probably acts by releasing the RNAP, when it is trapped or immobilized on tightly supercoiled DNA. Does not activate transcription on linear DNA. Probably not involved in DNA repair. The chain is RNA polymerase-associated protein RapA from Aliivibrio fischeri (strain ATCC 700601 / ES114) (Vibrio fischeri).